Reading from the N-terminus, the 198-residue chain is Probable GTP-binding protein EngB (198 aa).

An EngB-type G domain is found at 27–198 (DLPEVALAGR…ESWDTILSEL (172 aa)). Residues 35–42 (GRSNVGKS), 62–66 (GKTQL), 80–83 (DVPG), 147–150 (TKAD), and 179–181 (FSS) contribute to the GTP site. Positions 42 and 64 each coordinate Mg(2+).

It belongs to the TRAFAC class TrmE-Era-EngA-EngB-Septin-like GTPase superfamily. EngB GTPase family. The cofactor is Mg(2+).

Necessary for normal cell division and for the maintenance of normal septation. In Streptococcus agalactiae serotype Ia (strain ATCC 27591 / A909 / CDC SS700), this protein is Probable GTP-binding protein EngB.